We begin with the raw amino-acid sequence, 213 residues long: Ribosomal RNA small subunit methyltransferase G (213 aa).

S-adenosyl-L-methionine is bound by residues Gly75, Phe80, 128 to 129, and Arg144; that span reads IE.

This sequence belongs to the methyltransferase superfamily. RNA methyltransferase RsmG family.

It localises to the cytoplasm. It catalyses the reaction guanosine(527) in 16S rRNA + S-adenosyl-L-methionine = N(7)-methylguanosine(527) in 16S rRNA + S-adenosyl-L-homocysteine. Specifically methylates the N7 position of guanine in position 527 of 16S rRNA. The sequence is that of Ribosomal RNA small subunit methyltransferase G from Brucella anthropi (strain ATCC 49188 / DSM 6882 / CCUG 24695 / JCM 21032 / LMG 3331 / NBRC 15819 / NCTC 12168 / Alc 37) (Ochrobactrum anthropi).